The sequence spans 356 residues: 5-formaminoimidazole-4-carboxamide-1-(beta)-D-ribofuranosyl 5'-monophosphate synthetase 2 (356 aa).

Positions 27 and 94 each coordinate 5-amino-1-(5-phospho-beta-D-ribosyl)imidazole-4-carboxamide. The ATP-grasp domain occupies 101–333 (RENFTGMAVP…YSDLMQKRLS (233 aa)). Residues 145 to 196 (PHDI…TRYD) and Glu-226 contribute to the ATP site. Asn-255 contacts 5-amino-1-(5-phospho-beta-D-ribosyl)imidazole-4-carboxamide. Mg(2+)-binding residues include Glu-293 and Glu-306.

The protein belongs to the phosphohexose mutase family. Mg(2+) is required as a cofactor. Requires Mn(2+) as cofactor.

It carries out the reaction 5-amino-1-(5-phospho-beta-D-ribosyl)imidazole-4-carboxamide + formate + ATP = 5-formamido-1-(5-phospho-D-ribosyl)imidazole-4-carboxamide + ADP + phosphate. It functions in the pathway purine metabolism; IMP biosynthesis via de novo pathway; 5-formamido-1-(5-phospho-D-ribosyl)imidazole-4-carboxamide from 5-amino-1-(5-phospho-D-ribosyl)imidazole-4-carboxamide (formate route): step 1/1. Functionally, catalyzes the ATP- and formate-dependent formylation of 5-aminoimidazole-4-carboxamide-1-beta-d-ribofuranosyl 5'-monophosphate (AICAR) to 5-formaminoimidazole-4-carboxamide-1-beta-d-ribofuranosyl 5'-monophosphate (FAICAR) in the absence of folates. The polypeptide is 5-formaminoimidazole-4-carboxamide-1-(beta)-D-ribofuranosyl 5'-monophosphate synthetase 2 (Methanosarcina mazei (strain ATCC BAA-159 / DSM 3647 / Goe1 / Go1 / JCM 11833 / OCM 88) (Methanosarcina frisia)).